The sequence spans 208 residues: NAD(P)H-quinone oxidoreductase subunit I (208 aa).

4Fe-4S ferredoxin-type domains are found at residues 55-84 (GRIH…VDWV) and 95-124 (RNYS…MTEE). The [4Fe-4S] cluster site is built by C64, C67, C70, C74, C104, C107, C110, and C114.

The protein belongs to the complex I 23 kDa subunit family. In terms of assembly, NDH-1 is composed of at least 11 different subunits. [4Fe-4S] cluster is required as a cofactor.

It is found in the cellular thylakoid membrane. The catalysed reaction is a plastoquinone + NADH + (n+1) H(+)(in) = a plastoquinol + NAD(+) + n H(+)(out). It carries out the reaction a plastoquinone + NADPH + (n+1) H(+)(in) = a plastoquinol + NADP(+) + n H(+)(out). Its function is as follows. NDH-1 shuttles electrons from an unknown electron donor, via FMN and iron-sulfur (Fe-S) centers, to quinones in the respiratory and/or the photosynthetic chain. The immediate electron acceptor for the enzyme in this species is believed to be plastoquinone. Couples the redox reaction to proton translocation, and thus conserves the redox energy in a proton gradient. In Prochlorococcus marinus (strain MIT 9215), this protein is NAD(P)H-quinone oxidoreductase subunit I.